The following is a 136-amino-acid chain: Protein K5 (136 aa).

This sequence belongs to the poxviridae K5 protein family.

The protein is Protein K5 of Homo sapiens (Human).